The sequence spans 751 residues: Serine/threonine-protein kinase-like protein CCR4 (751 aa).

Positions Met1–Ser31 are cleaved as a signal peptide. Residues Leu32 to Ala366 lie on the Extracellular side of the membrane. N-linked (GlcNAc...) asparagine glycosylation is found at Asn42, Asn51, Asn98, Asn243, Asn254, Asn283, and Asn357. A helical membrane pass occupies residues Phe367–Phe387. The Cytoplasmic segment spans residues Lys388–Tyr751. The Protein kinase domain occupies Phe443–Leu733. Residues Leu449 to Val457 and Lys471 contribute to the ATP site. Asp579 acts as the Proton acceptor in catalysis.

It belongs to the protein kinase superfamily. Ser/Thr protein kinase family. In terms of assembly, homodimer. Expressed in roots, leaves, especially in trichomes, shoot apical meristems (SAM), and, to a lower extent, in floral buds.

The protein resides in the membrane. The catalysed reaction is L-seryl-[protein] + ATP = O-phospho-L-seryl-[protein] + ADP + H(+). It catalyses the reaction L-threonyl-[protein] + ATP = O-phospho-L-threonyl-[protein] + ADP + H(+). The chain is Serine/threonine-protein kinase-like protein CCR4 (CCR4) from Arabidopsis thaliana (Mouse-ear cress).